A 208-amino-acid polypeptide reads, in one-letter code: MAVYVEDHPLIKHKLGLMRQKDISTKDFRDLASEVAGLLTYEATQDMETEVATIDGWAGPVQVERIKGKKITIVPILRAGLGMMDGVINLIPSAKVSVVGFYRDEKTLQPVQYYVKTASAMDERIALILDPMLATGGTLLATIELLKASGCTRIKGLFLVAAPEGIEKIQKAHPDVDIYVAAIDERLNEVGYILPGLGDAGDKIFGTK.

Residues Arg78, Arg103, and Asp130 to Thr138 contribute to the 5-phospho-alpha-D-ribose 1-diphosphate site. Residues Ile193 and Gly198 to Ala200 contribute to the uracil site. 5-phospho-alpha-D-ribose 1-diphosphate is bound at residue Asp199.

This sequence belongs to the UPRTase family. Requires Mg(2+) as cofactor.

The catalysed reaction is UMP + diphosphate = 5-phospho-alpha-D-ribose 1-diphosphate + uracil. It functions in the pathway pyrimidine metabolism; UMP biosynthesis via salvage pathway; UMP from uracil: step 1/1. Its activity is regulated as follows. Allosterically activated by GTP. Catalyzes the conversion of uracil and 5-phospho-alpha-D-ribose 1-diphosphate (PRPP) to UMP and diphosphate. This Desulforapulum autotrophicum (strain ATCC 43914 / DSM 3382 / VKM B-1955 / HRM2) (Desulfobacterium autotrophicum) protein is Uracil phosphoribosyltransferase.